Here is a 77-residue protein sequence, read N- to C-terminus: uncharacterized protein (77 aa).

This is an uncharacterized protein from Acidianus ambivalens (Desulfurolobus ambivalens).